The chain runs to 156 residues: Small ribosomal subunit protein uS7 (156 aa).

Belongs to the universal ribosomal protein uS7 family. In terms of assembly, part of the 30S ribosomal subunit. Contacts proteins S9 and S11.

In terms of biological role, one of the primary rRNA binding proteins, it binds directly to 16S rRNA where it nucleates assembly of the head domain of the 30S subunit. Is located at the subunit interface close to the decoding center, probably blocks exit of the E-site tRNA. This Desulfovibrio desulfuricans (strain ATCC 27774 / DSM 6949 / MB) protein is Small ribosomal subunit protein uS7.